The chain runs to 183 residues: Type II secretion system protein H (183 aa).

Residues 1-8 (MRRHRQSG) constitute a propeptide, leader sequence. An N-methylphenylalanine modification is found at Phe9. The helical transmembrane segment at 9–28 (FTLLEVLLVAMLMGLVATAV) threads the bilayer.

The protein belongs to the GSP H family. Type II secretion is composed of four main components: the outer membrane complex, the inner membrane complex, the cytoplasmic secretion ATPase and the periplasm-spanning pseudopilus. Interacts with core component ExeG. In terms of processing, cleaved by prepilin peptidase. Post-translationally, methylated by prepilin peptidase at the amino group of the N-terminal phenylalanine once the leader sequence is cleaved by prepilin peptidase.

It localises to the cell inner membrane. Functionally, component of the type II secretion system required for the energy-dependent secretion of extracellular factors such as proteases and toxins from the periplasm. Part of the pseudopilus tip complex that is critical for the recognition and binding of secretion substrates. In Aeromonas hydrophila, this protein is Type II secretion system protein H (exeH).